Reading from the N-terminus, the 1535-residue chain is CLIP-associating protein 1 (1535 aa).

HEAT repeat units follow at residues 87 to 124 (AQIGTVLPSLIDRLGDAKDSVREQDQTLLLKIMDQAAN) and 163 to 200 (LTLSKIVPHICNLLGDPNSQVRDAAINSLVEIYRHVGE). The disordered stretch occupies residues 237 to 290 (NEKNFDDEDSVDGNRPSSASSSSSKAPSSSRRNVNLGTTRRLMSSSLGSKSSAA). Position 246 is a phosphoserine (S246). Low complexity predominate over residues 252-266 (PSSASSSSSKAPSSS). Residues 267–279 (RRNVNLGTTRRLM) show a composition bias toward polar residues. Residues 280 to 290 (SSSLGSKSSAA) show a composition bias toward low complexity. HEAT repeat units follow at residues 405-440 (HGAEAIMPTIFNLIPNSAKIMATSGVVAVRLIIRHT) and 441-477 (HIPRLIPVITSNCTSKSVAVRRRCFEFLDLLLQEWQT). 2 disordered regions span residues 543–600 (SDSI…RSRS) and 612–782 (SKVS…GRIP). A phosphoserine mark is found at S545, S548, S558, S559, and S568. Residues 548-567 (SLPQSDRSSSSSQESLNRPL) are compositionally biased toward low complexity. The span at 579–594 (SRGSTVSTKSVSTTGS) shows a compositional bias: low complexity. Phosphoserine is present on S600. Residues 612 to 633 (SKVSSSSGSPAFSSAAALPPGS) show a composition bias toward low complexity. S636, S646, S647, and S649 each carry phosphoserine. A compositionally biased stretch (polar residues) spans 645-658 (QSSGSTTNVASTPD). T656 is subject to Phosphothreonine. Positions 662-782 (RSRAKVVSQS…FGLGQSGRIP (121 aa)) are interaction with microtubules, MAPRE1 and MAPRE3. Residues 673 to 695 (RSRSANPAGAGSRSSSPGKLLGS) are compositionally biased toward low complexity. S684, S688, S695, and S702 each carry phosphoserine. T708 bears the Phosphothreonine mark. S711 bears the Phosphoserine mark. Positions 721–730 (QGCSRETSPN) are enriched in polar residues. Residues S784, S794, and S820 each carry the phosphoserine modification. An HEAT 5 repeat occupies 971-1008 (QQFNILMRFIVDQTQTPNLKVKVAILKYIESLARQMDP). The tract at residues 1078 to 1157 (LKNSSNTGVG…APSHKTLRRS (80 aa)) is disordered. The segment covering 1079-1094 (KNSSNTGVGSPSNTIG) has biased composition (polar residues). S1088 carries the post-translational modification Phosphoserine. 2 positions are modified to phosphothreonine: T1092 and T1096. The segment covering 1103-1112 (SRTSPLTSPT) has biased composition (low complexity). A phosphoserine mark is found at S1110, F1139, and S1193. The segment covering 1200–1213 (PIKRDGKKDCDIVS) has biased composition (basic and acidic residues). 2 disordered regions span residues 1200-1233 (PIKRDGKKDCDIVSRDGGAASPATEGRGGSEIEG) and 1245-1266 (LNTQPPRAFPGPRAREYNPYPY). Phosphoserine is present on S1220. Positions 1251-1535 (RAFPGPRARE…SSSSDVSTHS (285 aa)) are interaction with CLIP2 and RSN. An interaction with PHLDB2 region spans residues 1251–1535 (RAFPGPRARE…SSSSDVSTHS (285 aa)). The tract at residues 1253–1535 (FPGPRAREYN…SSSSDVSTHS (283 aa)) is localization to kinetochores. The stretch at 1296-1327 (DHSDLVADLLKELSNHNERVEERKGALLELLK) forms a coiled coil. HEAT repeat units lie at residues 1339 to 1376 (EHFKTILLLLLETLGDKDHSIRALALRVLREILRNQPA) and 1457 to 1494 (QLLVDIIPGLLQGYDNTESSVRKASVFCLVAIYSVIGE).

This sequence belongs to the CLASP family. In terms of assembly, interacts with ERC1, MAPRE1, MAPRE3, microtubules, and PHLDB2. The interaction with ERC1 may be mediated by PHLDB2. Interacts with GCC2; recruits CLASP1 to Golgi membranes. Interacts with CLIP2 and RSN. Interacts with MACF1. Interacts with mtcl2 and MTCL1. As to expression, highly expressed in brain and heart and at lower levels in kidney, lung, skeletal muscle and testis.

It localises to the cytoplasm. Its subcellular location is the cytoskeleton. The protein resides in the microtubule organizing center. It is found in the centrosome. The protein localises to the chromosome. It localises to the centromere. Its subcellular location is the kinetochore. The protein resides in the spindle. It is found in the golgi apparatus. The protein localises to the trans-Golgi network. Functionally, microtubule plus-end tracking protein that promotes the stabilization of dynamic microtubules. Involved in the nucleation of noncentrosomal microtubules originating from the trans-Golgi network (TGN). Required for the polarization of the cytoplasmic microtubule arrays in migrating cells towards the leading edge of the cell. May act at the cell cortex to enhance the frequency of rescue of depolymerizing microtubules by attaching their plus-ends to cortical platforms composed of ERC1 and PHLDB2. This cortical microtubule stabilizing activity is regulated at least in part by phosphatidylinositol 3-kinase signaling. Also performs a similar stabilizing function at the kinetochore which is essential for the bipolar alignment of chromosomes on the mitotic spindle. This is CLIP-associating protein 1 (Clasp1) from Mus musculus (Mouse).